Here is a 490-residue protein sequence, read N- to C-terminus: GTPase Der (490 aa).

2 consecutive EngA-type G domains span residues 3 to 166 (PVVA…MEDL) and 203 to 376 (IKLA…DSST). GTP is bound by residues 9-16 (GRPNVGKS), 56-60 (DTGGI), 118-121 (NKTD), 209-216 (GRPNVGKS), 256-260 (DTAGV), and 321-324 (NKWD). Residues 377 to 461 (RRVGTSMLTR…PIRIQFKEGE (85 aa)) enclose the KH-like domain.

The protein belongs to the TRAFAC class TrmE-Era-EngA-EngB-Septin-like GTPase superfamily. EngA (Der) GTPase family. In terms of assembly, associates with the 50S ribosomal subunit.

GTPase that plays an essential role in the late steps of ribosome biogenesis. The chain is GTPase Der from Escherichia coli O127:H6 (strain E2348/69 / EPEC).